Here is a 111-residue protein sequence, read N- to C-terminus: Ig kappa chain V-III region PC 7175 (111 aa).

A framework-1 region spans residues 1–23; sequence DIVLTQSPASLAVSLGQRATISC. A disulfide bridge connects residues Cys23 and Cys92. Residues 24–38 form a complementarity-determining-1 region; that stretch reads RASKSVSTSGYSYMH. Residues 39–53 are framework-2; the sequence is WYQQKPGQPPKLLIY. The complementarity-determining-2 stretch occupies residues 54-60; that stretch reads LASNLES. The interval 61–92 is framework-3; the sequence is GVPARFSGSGSGTDFTLNIHPVEEEDAATYYC. A complementarity-determining-3 region spans residues 93 to 101; sequence QHSRELPLT. A framework-4 region spans residues 102 to 111; that stretch reads FGAGTKLELK.

The protein is Ig kappa chain V-III region PC 7175 of Mus musculus (Mouse).